Reading from the N-terminus, the 57-residue chain is Large ribosomal subunit protein bL32 (57 aa).

The segment at 1 to 38 (MAVQQNKPTRSKRGMRRSHDALTAVTSLSVDKTSGEKH) is disordered.

The protein belongs to the bacterial ribosomal protein bL32 family.

The protein is Large ribosomal subunit protein bL32 of Escherichia coli O7:K1 (strain IAI39 / ExPEC).